A 417-amino-acid chain; its full sequence is Transmembrane protease serine 11G (417 aa).

The Cytoplasmic segment spans residues 1–21; the sequence is MYQPGILVRRKRVWKPWTVAL. The chain crosses the membrane as a helical; Signal-anchor for type II membrane protein span at residues 22-42; the sequence is ITVALLLALAVLIGLLVYFLV. Over 43-417 the chain is Extracellular; sequence YDEKTHYYQA…RDWIKSKTSI (375 aa). An SEA domain is found at 46–165; it reads KTHYYQASFW…PYLREMNAAQ (120 aa). N-linked (GlcNAc...) asparagine glycosylation is present at Asn-60. The region spanning 186-416 is the Peptidase S1 domain; the sequence is IADGKPADKA…YRDWIKSKTS (231 aa). An intrachain disulfide couples Cys-211 to Cys-227. Active-site charge relay system residues include His-226 and Asp-271. Intrachain disulfides connect Cys-336/Cys-352 and Cys-363/Cys-392. Residue Ser-367 is the Charge relay system of the active site.

Belongs to the peptidase S1 family.

The protein resides in the membrane. This Mus musculus (Mouse) protein is Transmembrane protease serine 11G (Tmprss11g).